The primary structure comprises 264 residues: Glutamate racemase (264 aa).

Substrate contacts are provided by residues 10-11 and 42-43; these read DS and YG. Cys73 acts as the Proton donor/acceptor in catalysis. 74–75 lines the substrate pocket; sequence NT. Cys183 functions as the Proton donor/acceptor in the catalytic mechanism. A substrate-binding site is contributed by 184 to 185; it reads TH.

It belongs to the aspartate/glutamate racemases family.

It carries out the reaction L-glutamate = D-glutamate. It participates in cell wall biogenesis; peptidoglycan biosynthesis. Its function is as follows. Provides the (R)-glutamate required for cell wall biosynthesis. The polypeptide is Glutamate racemase (Streptococcus gordonii (strain Challis / ATCC 35105 / BCRC 15272 / CH1 / DL1 / V288)).